Here is a 355-residue protein sequence, read N- to C-terminus: Enhancer of mRNA-decapping protein 1 (355 aa).

Disordered regions lie at residues 1-146, 210-230, and 301-330; these read MSSD…VDGM, MSQP…SQPM, and NSTA…KSSQ. Over residues 39-49 the composition is skewed to polar residues; that stretch reads AQKQQLPNGEQ. Basic residues predominate over residues 57–67; it reads KQSRKRGSGRQ. The segment covering 91-110 has biased composition (polar residues); sequence SIPSGSAGSESAQKETSAGQ. Low complexity predominate over residues 123-142; sequence VPAGGPAGKSSSEPASASSA.

Belongs to the EDC family.

It is found in the cytoplasm. In terms of biological role, mRNA-binding protein which stimulates mRNA decapping. This Eremothecium gossypii (strain ATCC 10895 / CBS 109.51 / FGSC 9923 / NRRL Y-1056) (Yeast) protein is Enhancer of mRNA-decapping protein 1 (EDC1).